A 150-amino-acid polypeptide reads, in one-letter code: Glycine cleavage system H-like protein gcvH2 (150 aa).

Positions 44–126 (VATVGLSSFG…PANNWMVKFK (83 aa)) constitute a Lipoyl-binding domain.

Belongs to the GcvH family.

This is Glycine cleavage system H-like protein gcvH2 (gcvH2) from Dictyostelium discoideum (Social amoeba).